Here is a 428-residue protein sequence, read N- to C-terminus: Kynureninase (428 aa).

Pyridoxal 5'-phosphate-binding positions include T104, T105, 132–135 (FPSD), D213, H216, and Y238. K239 is modified (N6-(pyridoxal phosphate)lysine). Pyridoxal 5'-phosphate-binding residues include W267 and T295.

The protein belongs to the kynureninase family. In terms of assembly, homodimer. Requires pyridoxal 5'-phosphate as cofactor.

The catalysed reaction is L-kynurenine + H2O = anthranilate + L-alanine + H(+). It carries out the reaction 3-hydroxy-L-kynurenine + H2O = 3-hydroxyanthranilate + L-alanine + H(+). It functions in the pathway amino-acid degradation; L-kynurenine degradation; L-alanine and anthranilate from L-kynurenine: step 1/1. The protein operates within cofactor biosynthesis; NAD(+) biosynthesis; quinolinate from L-kynurenine: step 2/3. Its function is as follows. Catalyzes the cleavage of L-kynurenine (L-Kyn) and L-3-hydroxykynurenine (L-3OHKyn) into anthranilic acid (AA) and 3-hydroxyanthranilic acid (3-OHAA), respectively. This Bacillus thuringiensis subsp. konkukian (strain 97-27) protein is Kynureninase.